The sequence spans 265 residues: NAD kinase (265 aa).

Asp45 serves as the catalytic Proton acceptor. NAD(+) is bound by residues 45-46 (DG), 121-122 (NE), Arg147, Asp149, Ala184, and Gln221.

The protein belongs to the NAD kinase family. A divalent metal cation serves as cofactor.

It localises to the cytoplasm. The enzyme catalyses NAD(+) + ATP = ADP + NADP(+) + H(+). Involved in the regulation of the intracellular balance of NAD and NADP, and is a key enzyme in the biosynthesis of NADP. Catalyzes specifically the phosphorylation on 2'-hydroxyl of the adenosine moiety of NAD to yield NADP. The polypeptide is NAD kinase (Leuconostoc citreum (strain KM20)).